Here is a 677-residue protein sequence, read N- to C-terminus: UvrABC system protein B (677 aa).

Residues 31-417 form the Helicase ATP-binding domain; sequence DRIESGETDI…SDGVVEQIIR (387 aa). 44–51 provides a ligand contact to ATP; that stretch reads GATGTGKS. Positions 97-120 match the Beta-hairpin motif; sequence YYDYYQPEAYVPKTDTFIEKDASV. Positions 434–596 constitute a Helicase C-terminal domain; the sequence is QIDDLLEEIR…VTPVPIKKTV (163 aa). Residues 629 to 664 form the UVR domain; that stretch reads KSHIKSLEAKMYMAAESLMFEEAAELRDEIQSLKEK.

Belongs to the UvrB family. In terms of assembly, forms a heterotetramer with UvrA during the search for lesions. Interacts with UvrC in an incision complex.

The protein resides in the cytoplasm. In terms of biological role, the UvrABC repair system catalyzes the recognition and processing of DNA lesions. A damage recognition complex composed of 2 UvrA and 2 UvrB subunits scans DNA for abnormalities. Upon binding of the UvrA(2)B(2) complex to a putative damaged site, the DNA wraps around one UvrB monomer. DNA wrap is dependent on ATP binding by UvrB and probably causes local melting of the DNA helix, facilitating insertion of UvrB beta-hairpin between the DNA strands. Then UvrB probes one DNA strand for the presence of a lesion. If a lesion is found the UvrA subunits dissociate and the UvrB-DNA preincision complex is formed. This complex is subsequently bound by UvrC and the second UvrB is released. If no lesion is found, the DNA wraps around the other UvrB subunit that will check the other stand for damage. The protein is UvrABC system protein B of Tropheryma whipplei (strain TW08/27) (Whipple's bacillus).